Consider the following 726-residue polypeptide: Procollagen-lysine,2-oxoglutarate 5-dioxygenase 1 (726 aa).

The signal sequence occupies residues Met-1–Thr-18. N-linked (GlcNAc...) asparagine glycosylation is found at Asn-196 and Asn-537. The Fe2OG dioxygenase domain maps to Gln-635–Pro-726. His-655 and Asp-657 together coordinate Fe cation. The N-linked (GlcNAc...) asparagine glycan is linked to Asn-685. A Fe cation-binding site is contributed by His-707. Arg-717 is a catalytic residue.

In terms of assembly, homodimer. Identified in a complex with P3H3 and P3H4. Requires Fe(2+) as cofactor. The cofactor is L-ascorbate.

It localises to the rough endoplasmic reticulum membrane. The enzyme catalyses L-lysyl-[collagen] + 2-oxoglutarate + O2 = (5R)-5-hydroxy-L-lysyl-[collagen] + succinate + CO2. Its function is as follows. Part of a complex composed of PLOD1, P3H3 and P3H4 that catalyzes hydroxylation of lysine residues in collagen alpha chains and is required for normal assembly and cross-linkling of collagen fibrils. Forms hydroxylysine residues in -Xaa-Lys-Gly- sequences in collagens. These hydroxylysines serve as sites of attachment for carbohydrate units and are essential for the stability of the intermolecular collagen cross-links. This is Procollagen-lysine,2-oxoglutarate 5-dioxygenase 1 (PLOD1) from Bos taurus (Bovine).